The sequence spans 277 residues: Shikimate dehydrogenase (NADP(+)) (277 aa).

Shikimate contacts are provided by residues 15-17 (SLS) and T62. K66 serves as the catalytic Proton acceptor. N87 and D102 together coordinate shikimate. NADP(+)-binding positions include 127 to 131 (GAGGA), 151 to 156 (NRTVDK), and I219. Y221 is a binding site for shikimate. G242 is a binding site for NADP(+).

It belongs to the shikimate dehydrogenase family. As to quaternary structure, homodimer.

The enzyme catalyses shikimate + NADP(+) = 3-dehydroshikimate + NADPH + H(+). It functions in the pathway metabolic intermediate biosynthesis; chorismate biosynthesis; chorismate from D-erythrose 4-phosphate and phosphoenolpyruvate: step 4/7. Its function is as follows. Involved in the biosynthesis of the chorismate, which leads to the biosynthesis of aromatic amino acids. Catalyzes the reversible NADPH linked reduction of 3-dehydroshikimate (DHSA) to yield shikimate (SA). This is Shikimate dehydrogenase (NADP(+)) from Bacillus cereus (strain AH820).